Here is an 89-residue protein sequence, read N- to C-terminus: Small ribosomal subunit protein uS15 (89 aa).

It belongs to the universal ribosomal protein uS15 family. Part of the 30S ribosomal subunit. Forms a bridge to the 50S subunit in the 70S ribosome, contacting the 23S rRNA.

Its function is as follows. One of the primary rRNA binding proteins, it binds directly to 16S rRNA where it helps nucleate assembly of the platform of the 30S subunit by binding and bridging several RNA helices of the 16S rRNA. In terms of biological role, forms an intersubunit bridge (bridge B4) with the 23S rRNA of the 50S subunit in the ribosome. The chain is Small ribosomal subunit protein uS15 from Anaeromyxobacter dehalogenans (strain 2CP-1 / ATCC BAA-258).